The chain runs to 299 residues: ATP phosphoribosyltransferase (299 aa).

Belongs to the ATP phosphoribosyltransferase family. Long subfamily. As to quaternary structure, equilibrium between an active dimeric form, an inactive hexameric form and higher aggregates. Interconversion between the various forms is largely reversible and is influenced by the natural substrates and inhibitors of the enzyme. Mg(2+) serves as cofactor.

The protein resides in the cytoplasm. The catalysed reaction is 1-(5-phospho-beta-D-ribosyl)-ATP + diphosphate = 5-phospho-alpha-D-ribose 1-diphosphate + ATP. It functions in the pathway amino-acid biosynthesis; L-histidine biosynthesis; L-histidine from 5-phospho-alpha-D-ribose 1-diphosphate: step 1/9. Its activity is regulated as follows. Feedback inhibited by histidine. Catalyzes the condensation of ATP and 5-phosphoribose 1-diphosphate to form N'-(5'-phosphoribosyl)-ATP (PR-ATP). Has a crucial role in the pathway because the rate of histidine biosynthesis seems to be controlled primarily by regulation of HisG enzymatic activity. This Buchnera aphidicola subsp. Diuraphis noxia protein is ATP phosphoribosyltransferase.